The chain runs to 153 residues: Neuromedin-S (153 aa).

Positions 1–26 (MKHPLPHYSPILFIYCFCMLQIPSSG) are cleaved as a signal peptide. Propeptides lie at residues 27–69 (ASPP…VYKR), 70–105 (FLFH…ASRR), and 106–108 (MKR). Asn144 carries the post-translational modification Asparagine amide. The propeptide occupies 147–153 (YTDNNFQ).

Belongs to the NmU family.

It is found in the secreted. Its function is as follows. Implicated in the regulation of circadian rhythms through autocrine and/or paracrine actions. This Mus musculus (Mouse) protein is Neuromedin-S (Nms).